A 401-amino-acid chain; its full sequence is ATP-dependent RNA helicase eIF4A (401 aa).

The short motif at 28 to 56 (DNFDDMKLKGELLRGIYAYGFERPSAIQQ) is the Q motif element. The 171-residue stretch at 59-229 (IMPIVTGRDC…KKFMRDPIRI (171 aa)) folds into the Helicase ATP-binding domain. 72–79 (AQSGTGKT) contributes to the ATP binding site. Residues 177–180 (DEAD) carry the DEAD box motif. The region spanning 240-401 (GIRQFYINVE…EMPLNVADLI (162 aa)) is the Helicase C-terminal domain.

Belongs to the DEAD box helicase family. eIF4A subfamily. As to quaternary structure, component of the eIF4F complex, which composition varies with external and internal environmental conditions. It is composed of at least eIF4A, eIF4E and eIF4G.

The protein resides in the cytoplasm. The catalysed reaction is ATP + H2O = ADP + phosphate + H(+). Its function is as follows. ATP-dependent RNA helicase which is a subunit of the eIF4F complex involved in cap recognition and is required for mRNA binding to ribosome. In the current model of translation initiation, eIF4A unwinds RNA secondary structures in the 5'-UTR of mRNAs which is necessary to allow efficient binding of the small ribosomal subunit, and subsequent scanning for the initiator codon. This chain is ATP-dependent RNA helicase eIF4A (TIF1), found in Cryptococcus neoformans var. neoformans serotype D (strain B-3501A) (Filobasidiella neoformans).